A 106-amino-acid polypeptide reads, in one-letter code: UPF0145 protein GSU2791 (106 aa).

The protein belongs to the UPF0145 family.

The sequence is that of UPF0145 protein GSU2791 from Geobacter sulfurreducens (strain ATCC 51573 / DSM 12127 / PCA).